A 440-amino-acid polypeptide reads, in one-letter code: Thymidine phosphorylase (440 aa).

This sequence belongs to the thymidine/pyrimidine-nucleoside phosphorylase family. Homodimer.

It carries out the reaction thymidine + phosphate = 2-deoxy-alpha-D-ribose 1-phosphate + thymine. It functions in the pathway pyrimidine metabolism; dTMP biosynthesis via salvage pathway; dTMP from thymine: step 1/2. Its function is as follows. The enzymes which catalyze the reversible phosphorolysis of pyrimidine nucleosides are involved in the degradation of these compounds and in their utilization as carbon and energy sources, or in the rescue of pyrimidine bases for nucleotide synthesis. This chain is Thymidine phosphorylase, found in Yersinia enterocolitica serotype O:8 / biotype 1B (strain NCTC 13174 / 8081).